Here is a 694-residue protein sequence, read N- to C-terminus: ATP-dependent RNA helicase DHX33 (694 aa).

The Helicase ATP-binding domain maps to 78–246; sequence LKELEANDTV…FNCKGMYLEG (169 aa). 91–98 contributes to the ATP binding site; that stretch reads SETGSGKT. A DEAH box motif is present at residues 188-191; it reads DEAH. The Helicase C-terminal domain occupies 270–443; the sequence is TLFHIHRTTP…SMVLQLLALD (174 aa).

The protein belongs to the DEAD box helicase family. DEAH subfamily.

The protein localises to the nucleus. The protein resides in the nucleolus. The enzyme catalyses ATP + H2O = ADP + phosphate + H(+). Part of a translational control module, also containing pths/DDX47 and ais/DDX52, which coordinates germline stem cell differentiation with ribosome biogenesis during oogenesis. This module allows for coregulation of ribosomal proteins and non1/GTPBP4, a p53 repressor, preventing p53 stabilization, cell cycle arrest and loss of stem cell differentiation. The protein is ATP-dependent RNA helicase DHX33 of Drosophila melanogaster (Fruit fly).